The chain runs to 122 residues: Large ribosomal subunit protein uL14 (122 aa).

This sequence belongs to the universal ribosomal protein uL14 family. As to quaternary structure, part of the 50S ribosomal subunit. Forms a cluster with proteins L3 and L19. In the 70S ribosome, L14 and L19 interact and together make contacts with the 16S rRNA in bridges B5 and B8.

Functionally, binds to 23S rRNA. Forms part of two intersubunit bridges in the 70S ribosome. This Mesorhizobium japonicum (strain LMG 29417 / CECT 9101 / MAFF 303099) (Mesorhizobium loti (strain MAFF 303099)) protein is Large ribosomal subunit protein uL14.